The primary structure comprises 513 residues: Coiled-coil domain-containing protein 102B (513 aa).

Positions 1–217 (MNLDSIHRLI…IDSLKLSEEM (217 aa)) are required for centriolar localization and for interaction with CEP250, CROCC, LRRC45 and NEK2. Residues S21, S22, S34, S135, S142, S194, and S210 each carry the phosphoserine modification. Residues 72–142 (ELRLRELEEV…ELSTLKKKQS (71 aa)) adopt a coiled-coil conformation. Coiled coils occupy residues 268-337 (QKIL…ESKS) and 363-513 (WDKR…LQNW). S401, S404, and S406 each carry phosphoserine. A disordered region spans residues 493 to 513 (LDEEKERNENLETELRHLQNW).

In terms of assembly, interacts (via N-terminus) with centriolar protein CEP250/CNAP1; the interaction results in recruitment of CCDC102B to the proximal ends of centrioles. Interacts (via N-terminus) with CROCC/rootletin and LRRC45. Interacts (via N-terminus) with serine/threonine-protein kinase NEK2; the interaction results in phosphorylation of CCDC102B. Post-translationally, phosphorylated directly or indirectly by NEK2 during mitosis which causes dissociation of CCDC102B from the centrosome and allows for centrosome separation.

The protein localises to the cytoplasm. It is found in the cytoskeleton. Its subcellular location is the microtubule organizing center. The protein resides in the centrosome. It localises to the centriole. Functionally, during interphase, forms fibers at the proximal ends of centrioles to maintain centrosome cohesion. During mitosis, dissociates from the centrosome following phosphorylation to allow centrosome separation. Contributes to CROCC/rootletin filament formation. The sequence is that of Coiled-coil domain-containing protein 102B (CCDC102B) from Homo sapiens (Human).